We begin with the raw amino-acid sequence, 544 residues long: Bacillolysin (544 aa).

An N-terminal signal peptide occupies residues 1-25 (MNKRAMLGAIGLAFGLMAWPFGASA). A propeptide spans 26 to 225 (KGKSMVWNEQ…DEAKPGGAQP (200 aa)) (activation peptide). Ca(2+) is bound by residues D285, D287, Q289, and D366. Position 370 (H370) interacts with Zn(2+). Residue E371 is part of the active site. 2 residues coordinate Zn(2+): H374 and E394. The Ca(2+) site is built by E405, N411, D413, E415, E418, Y421, T422, V425, and D428. H459 acts as the Proton donor in catalysis.

The protein belongs to the peptidase M4 family. Requires Ca(2+) as cofactor. Zn(2+) is required as a cofactor.

The protein resides in the secreted. The enzyme catalyses Similar, but not identical, to that of thermolysin.. Functionally, extracellular zinc metalloprotease. The polypeptide is Bacillolysin (npr) (Bacillus caldolyticus).